Here is a 171-residue protein sequence, read N- to C-terminus: 3-hydroxydecanoyl-[acyl-carrier-protein] dehydratase (171 aa).

H70 is an active-site residue.

Belongs to the thioester dehydratase family. FabA subfamily. In terms of assembly, homodimer.

The protein localises to the cytoplasm. It catalyses the reaction a (3R)-hydroxyacyl-[ACP] = a (2E)-enoyl-[ACP] + H2O. The enzyme catalyses (3R)-hydroxydecanoyl-[ACP] = (2E)-decenoyl-[ACP] + H2O. The catalysed reaction is (2E)-decenoyl-[ACP] = (3Z)-decenoyl-[ACP]. Its pathway is lipid metabolism; fatty acid biosynthesis. Functionally, necessary for the introduction of cis unsaturation into fatty acids. Catalyzes the dehydration of (3R)-3-hydroxydecanoyl-ACP to E-(2)-decenoyl-ACP and then its isomerization to Z-(3)-decenoyl-ACP. Can catalyze the dehydratase reaction for beta-hydroxyacyl-ACPs with saturated chain lengths up to 16:0, being most active on intermediate chain length. This chain is 3-hydroxydecanoyl-[acyl-carrier-protein] dehydratase, found in Pseudomonas fluorescens (strain SBW25).